The sequence spans 74 residues: Peptide ToAP4 (74 aa).

Residues 1 to 22 (MQIKHLITLFFLVLIVADQCSA) form the signal peptide. Lys39 is subject to Lysine amide. Positions 40–74 (GGRRKREIAAQIEQYRDLQKREAELEELLDRLPMF) are excised as a propeptide.

The protein belongs to the non-disulfide-bridged peptide (NDBP) superfamily. Short antimicrobial peptide (group 4) family. As to expression, expressed by the venom gland.

The protein resides in the secreted. Functionally, shows anti-inflammatory activities, since it decreases release of pro-inflammatory cytokines, and increases release of anti-inflammatory cytokines. Acts by blocking the Toll-like receptor 4 (TLR4). Also increases MHC-II expression in LPS-stimulated cells. Does not show antibacterial activity on Mycobacterium abscessus subsp. massiliense. Does not show antifungal activity. Has low hemolytic activity on human erythrocyte and low monocyte cytotoxicity. In vivo, does not induce immune cell migration. Helical wheel projections predict an amphipathic peptide with distinct hydrophobic and hydrophilic faces. This Tityus obscurus (Amazonian scorpion) protein is Peptide ToAP4.